The chain runs to 85 residues: ATP synthase subunit c (85 aa).

2 helical membrane passes run 10–30 (IAVA…FAIL) and 53–73 (FIVA…ALFF).

Belongs to the ATPase C chain family. In terms of assembly, F-type ATPases have 2 components, F(1) - the catalytic core - and F(0) - the membrane proton channel. F(1) has five subunits: alpha(3), beta(3), gamma(1), delta(1), epsilon(1). F(0) has three main subunits: a(1), b(2) and c(10-14). The alpha and beta chains form an alternating ring which encloses part of the gamma chain. F(1) is attached to F(0) by a central stalk formed by the gamma and epsilon chains, while a peripheral stalk is formed by the delta and b chains.

The protein localises to the cell inner membrane. F(1)F(0) ATP synthase produces ATP from ADP in the presence of a proton or sodium gradient. F-type ATPases consist of two structural domains, F(1) containing the extramembraneous catalytic core and F(0) containing the membrane proton channel, linked together by a central stalk and a peripheral stalk. During catalysis, ATP synthesis in the catalytic domain of F(1) is coupled via a rotary mechanism of the central stalk subunits to proton translocation. Its function is as follows. Key component of the F(0) channel; it plays a direct role in translocation across the membrane. A homomeric c-ring of between 10-14 subunits forms the central stalk rotor element with the F(1) delta and epsilon subunits. This chain is ATP synthase subunit c, found in Shewanella halifaxensis (strain HAW-EB4).